Reading from the N-terminus, the 310-residue chain is AMMECR1-like protein (310 aa).

Positions leucine 26 to threonine 95 are disordered. Residues glycine 28–aspartate 66 are compositionally biased toward polar residues. Serine 74 is subject to Phosphoserine. Residues asparagine 97–arginine 291 enclose the AMMECR1 domain.

In Homo sapiens (Human), this protein is AMMECR1-like protein (AMMECR1L).